Consider the following 362-residue polypeptide: 3-dehydroquinate synthase (362 aa).

Residues 71 to 76 (DGERYK), 105 to 109 (GVIGD), 129 to 130 (TT), lysine 142, lysine 151, and 169 to 172 (CLKT) contribute to the NAD(+) site. Residues glutamate 184, histidine 247, and histidine 264 each coordinate Zn(2+).

The protein belongs to the sugar phosphate cyclases superfamily. Dehydroquinate synthase family. It depends on Co(2+) as a cofactor. Zn(2+) serves as cofactor. The cofactor is NAD(+).

The protein resides in the cytoplasm. The enzyme catalyses 7-phospho-2-dehydro-3-deoxy-D-arabino-heptonate = 3-dehydroquinate + phosphate. The protein operates within metabolic intermediate biosynthesis; chorismate biosynthesis; chorismate from D-erythrose 4-phosphate and phosphoenolpyruvate: step 2/7. Catalyzes the conversion of 3-deoxy-D-arabino-heptulosonate 7-phosphate (DAHP) to dehydroquinate (DHQ). In Salmonella arizonae (strain ATCC BAA-731 / CDC346-86 / RSK2980), this protein is 3-dehydroquinate synthase.